The chain runs to 487 residues: N-succinylglutamate 5-semialdehyde dehydrogenase (487 aa).

221–226 (GSSDTG) provides a ligand contact to NAD(+). Active-site residues include E244 and C278.

This sequence belongs to the aldehyde dehydrogenase family. AstD subfamily.

It catalyses the reaction N-succinyl-L-glutamate 5-semialdehyde + NAD(+) + H2O = N-succinyl-L-glutamate + NADH + 2 H(+). Its pathway is amino-acid degradation; L-arginine degradation via AST pathway; L-glutamate and succinate from L-arginine: step 4/5. Catalyzes the NAD-dependent reduction of succinylglutamate semialdehyde into succinylglutamate. The protein is N-succinylglutamate 5-semialdehyde dehydrogenase of Burkholderia thailandensis (strain ATCC 700388 / DSM 13276 / CCUG 48851 / CIP 106301 / E264).